The following is a 268-amino-acid chain: Tryptophan synthase alpha chain (268 aa).

Active-site proton acceptor residues include Glu-49 and Asp-60.

The protein belongs to the TrpA family. Tetramer of two alpha and two beta chains.

It carries out the reaction (1S,2R)-1-C-(indol-3-yl)glycerol 3-phosphate + L-serine = D-glyceraldehyde 3-phosphate + L-tryptophan + H2O. The protein operates within amino-acid biosynthesis; L-tryptophan biosynthesis; L-tryptophan from chorismate: step 5/5. In terms of biological role, the alpha subunit is responsible for the aldol cleavage of indoleglycerol phosphate to indole and glyceraldehyde 3-phosphate. The sequence is that of Tryptophan synthase alpha chain from Salmonella agona (strain SL483).